An 879-amino-acid chain; its full sequence is Leucine--tRNA ligase (879 aa).

The 'HIGH' region motif lies at 45 to 55; sequence PYPSGALHMGH. Positions 637–641 match the 'KMSKS' region motif; sequence KMSKS. K640 is an ATP binding site.

Belongs to the class-I aminoacyl-tRNA synthetase family.

The protein resides in the cytoplasm. The catalysed reaction is tRNA(Leu) + L-leucine + ATP = L-leucyl-tRNA(Leu) + AMP + diphosphate. This chain is Leucine--tRNA ligase, found in Xylella fastidiosa (strain 9a5c).